The following is a 185-amino-acid chain: Elongation factor P (185 aa).

The protein belongs to the elongation factor P family.

It localises to the cytoplasm. The protein operates within protein biosynthesis; polypeptide chain elongation. In terms of biological role, involved in peptide bond synthesis. Stimulates efficient translation and peptide-bond synthesis on native or reconstituted 70S ribosomes in vitro. Probably functions indirectly by altering the affinity of the ribosome for aminoacyl-tRNA, thus increasing their reactivity as acceptors for peptidyl transferase. In Pseudothermotoga lettingae (strain ATCC BAA-301 / DSM 14385 / NBRC 107922 / TMO) (Thermotoga lettingae), this protein is Elongation factor P.